Reading from the N-terminus, the 232-residue chain is Large ribosomal subunit protein uL1 (232 aa).

The protein belongs to the universal ribosomal protein uL1 family. As to quaternary structure, part of the 50S ribosomal subunit.

Functionally, binds directly to 23S rRNA. The L1 stalk is quite mobile in the ribosome, and is involved in E site tRNA release. Its function is as follows. Protein L1 is also a translational repressor protein, it controls the translation of the L11 operon by binding to its mRNA. The polypeptide is Large ribosomal subunit protein uL1 (Chlamydia trachomatis serovar D (strain ATCC VR-885 / DSM 19411 / UW-3/Cx)).